A 183-amino-acid polypeptide reads, in one-letter code: Putative 3-methyladenine DNA glycosylase (183 aa).

The protein belongs to the DNA glycosylase MPG family.

The protein is Putative 3-methyladenine DNA glycosylase of Rickettsia conorii (strain ATCC VR-613 / Malish 7).